The primary structure comprises 255 residues: 1-(5-phosphoribosyl)-5-[(5-phosphoribosylamino)methylideneamino] imidazole-4-carboxamide isomerase (255 aa).

Aspartate 12 functions as the Proton acceptor in the catalytic mechanism. The active-site Proton donor is aspartate 131.

It belongs to the HisA/HisF family.

Its subcellular location is the cytoplasm. The catalysed reaction is 1-(5-phospho-beta-D-ribosyl)-5-[(5-phospho-beta-D-ribosylamino)methylideneamino]imidazole-4-carboxamide = 5-[(5-phospho-1-deoxy-D-ribulos-1-ylimino)methylamino]-1-(5-phospho-beta-D-ribosyl)imidazole-4-carboxamide. It functions in the pathway amino-acid biosynthesis; L-histidine biosynthesis; L-histidine from 5-phospho-alpha-D-ribose 1-diphosphate: step 4/9. The protein is 1-(5-phosphoribosyl)-5-[(5-phosphoribosylamino)methylideneamino] imidazole-4-carboxamide isomerase of Cutibacterium acnes (strain DSM 16379 / KPA171202) (Propionibacterium acnes).